The primary structure comprises 181 residues: Trafficking protein particle complex subunit 3-like protein (181 aa).

Cysteine 68 carries S-palmitoyl cysteine lipidation.

It belongs to the TRAPP small subunits family. BET3 subfamily. Homodimer. Component of the multisubunit TRAPP (transport protein particle) complex, which includes at least TRAPPC2, TRAPPC2L, TRAPPC3, TRAPPC3L, TRAPPC4, TRAPPC5, TRAPPC8, TRAPPC9, TRAPPC10, TRAPPC11 and TRAPPC12.

Its subcellular location is the golgi apparatus. The protein localises to the cis-Golgi network. It localises to the endoplasmic reticulum. Functionally, may play a role in vesicular transport from endoplasmic reticulum to Golgi. The chain is Trafficking protein particle complex subunit 3-like protein (TRAPPC3L) from Homo sapiens (Human).